Consider the following 176-residue polypeptide: Imidazoleglycerol-phosphate dehydratase (176 aa).

This sequence belongs to the imidazoleglycerol-phosphate dehydratase family.

It is found in the cytoplasm. It carries out the reaction D-erythro-1-(imidazol-4-yl)glycerol 3-phosphate = 3-(imidazol-4-yl)-2-oxopropyl phosphate + H2O. It functions in the pathway amino-acid biosynthesis; L-histidine biosynthesis; L-histidine from 5-phospho-alpha-D-ribose 1-diphosphate: step 6/9. In Pyrococcus furiosus (strain ATCC 43587 / DSM 3638 / JCM 8422 / Vc1), this protein is Imidazoleglycerol-phosphate dehydratase.